Reading from the N-terminus, the 301-residue chain is Ribosomal protein L11 methyltransferase (301 aa).

4 residues coordinate S-adenosyl-L-methionine: Thr-146, Gly-167, Asp-189, and Asn-234.

It belongs to the methyltransferase superfamily. PrmA family.

The protein localises to the cytoplasm. It catalyses the reaction L-lysyl-[protein] + 3 S-adenosyl-L-methionine = N(6),N(6),N(6)-trimethyl-L-lysyl-[protein] + 3 S-adenosyl-L-homocysteine + 3 H(+). In terms of biological role, methylates ribosomal protein L11. The sequence is that of Ribosomal protein L11 methyltransferase from Acinetobacter baumannii (strain SDF).